A 123-amino-acid chain; its full sequence is Large-conductance mechanosensitive channel (123 aa).

2 consecutive transmembrane segments (helical) span residues 14–34 (VLDLAVGVIIGSAFTGLVTSL) and 67–87 (GNFINDVLNFLIIAFVVFLLV).

Belongs to the MscL family. In terms of assembly, homopentamer.

It localises to the cell membrane. Its function is as follows. Channel that opens in response to stretch forces in the membrane lipid bilayer. May participate in the regulation of osmotic pressure changes within the cell. The protein is Large-conductance mechanosensitive channel of Lacticaseibacillus casei (strain BL23) (Lactobacillus casei).